The following is a 369-amino-acid chain: Cystathionine gamma-synthase (369 aa).

Lys200 carries the post-translational modification N6-(pyridoxal phosphate)lysine.

The protein belongs to the trans-sulfuration enzymes family. Homotetramer. Requires pyridoxal 5'-phosphate as cofactor.

It is found in the cytoplasm. It catalyses the reaction O-succinyl-L-homoserine + L-cysteine = L,L-cystathionine + succinate + H(+). In terms of biological role, catalyzes the formation of L-cystathionine from O-succinyl-L-homoserine (OSHS) and L-cysteine, via a gamma-replacement reaction. In the absence of thiol, catalyzes gamma-elimination to form 2-oxobutanoate, succinate and ammonia. This is Cystathionine gamma-synthase (metB) from Haemophilus influenzae (strain ATCC 51907 / DSM 11121 / KW20 / Rd).